A 183-amino-acid chain; its full sequence is uncharacterized protein (183 aa).

A disordered region spans residues 136–183; sequence EPPASVPSKQSGRSDKKKSTRKSPTFRNRPDFRKNKGRQLNKTTKQKK. The span at 170-183 shows a compositional bias: basic residues; it reads NKGRQLNKTTKQKK.

This is an uncharacterized protein from Homo sapiens (Human).